The chain runs to 180 residues: Cell division protein SepF (180 aa).

Positions 1–66 (MAFSFKSFFG…NRNGFAYDNG (66 aa)) are disordered. The span at 12–23 (ADDEEEEYEDSG) shows a compositional bias: acidic residues. Over residues 24 to 57 (YEQQPNQGQQQPVNSQQQNTSNQSYSGYNNQNQN) the composition is skewed to low complexity.

This sequence belongs to the SepF family. In terms of assembly, homodimer. Interacts with FtsZ.

It localises to the cytoplasm. Cell division protein that is part of the divisome complex and is recruited early to the Z-ring. Probably stimulates Z-ring formation, perhaps through the cross-linking of FtsZ protofilaments. Its function overlaps with FtsA. This is Cell division protein SepF from Oenococcus oeni (strain ATCC BAA-331 / PSU-1).